The sequence spans 319 residues: Ribosomal large subunit pseudouridine synthase C (319 aa).

Residues 20–83 (QRIDNFLRTQ…AEREEEAVSP (64 aa)) enclose the S4 RNA-binding domain. Asp-144 is a catalytic residue.

Belongs to the pseudouridine synthase RluA family.

The catalysed reaction is uridine(955/2504/2580) in 23S rRNA = pseudouridine(955/2504/2580) in 23S rRNA. Its function is as follows. Responsible for synthesis of pseudouridine from uracil at positions 955, 2504 and 2580 in 23S ribosomal RNA. The sequence is that of Ribosomal large subunit pseudouridine synthase C (rluC) from Salmonella typhimurium (strain LT2 / SGSC1412 / ATCC 700720).